A 500-amino-acid polypeptide reads, in one-letter code: Lysine--tRNA ligase (500 aa).

Mg(2+) contacts are provided by glutamate 410 and glutamate 417.

Belongs to the class-II aminoacyl-tRNA synthetase family. Homodimer. Mg(2+) is required as a cofactor.

Its subcellular location is the cytoplasm. The enzyme catalyses tRNA(Lys) + L-lysine + ATP = L-lysyl-tRNA(Lys) + AMP + diphosphate. This Pseudomonas entomophila (strain L48) protein is Lysine--tRNA ligase.